Here is a 1679-residue protein sequence, read N- to C-terminus: Maestro heat-like repeat-containing protein family member 2A (1679 aa).

HEAT repeat units lie at residues 68-91 (ATTD…ISTQ), 92-128 (RKMN…QMRD), 190-229 (MPYM…TVQF), 293-313 (EQVY…GHWP), 314-350 (LFPS…ELHV), 380-417 (SYPK…ADDP), 422-459 (KTIY…SGFQ), 571-610 (PAPQ…SIAP), 614-654 (DMWE…SLKK), 737-774 (KTVL…ETVK), 848-887 (SALT…MKPF), 991-1028 (GQFG…LHVS), 1219-1261 (DPLM…SHGP), 1387-1425 (KLLR…GAPR), and 1632-1669 (MDLV…CNQH).

This is Maestro heat-like repeat-containing protein family member 2A (Mroh2a) from Mus musculus (Mouse).